Here is a 138-residue protein sequence, read N- to C-terminus: Nucleoside diphosphate kinase (138 aa).

Lys9, Phe57, Arg85, Thr91, Arg102, and Asn112 together coordinate ATP. The Pros-phosphohistidine intermediate role is filled by His115.

This sequence belongs to the NDK family. Homotetramer. Requires Mg(2+) as cofactor.

The protein resides in the cytoplasm. The enzyme catalyses a 2'-deoxyribonucleoside 5'-diphosphate + ATP = a 2'-deoxyribonucleoside 5'-triphosphate + ADP. The catalysed reaction is a ribonucleoside 5'-diphosphate + ATP = a ribonucleoside 5'-triphosphate + ADP. Its function is as follows. Major role in the synthesis of nucleoside triphosphates other than ATP. The ATP gamma phosphate is transferred to the NDP beta phosphate via a ping-pong mechanism, using a phosphorylated active-site intermediate. This Desulfatibacillum aliphaticivorans protein is Nucleoside diphosphate kinase.